Reading from the N-terminus, the 344-residue chain is tRNA N6-adenosine threonylcarbamoyltransferase (344 aa).

Fe cation contacts are provided by H112 and H116. Substrate contacts are provided by residues L134 to G138, D167, G180, and N280. D308 contributes to the Fe cation binding site.

The protein belongs to the KAE1 / TsaD family. It depends on Fe(2+) as a cofactor.

It is found in the cytoplasm. The enzyme catalyses L-threonylcarbamoyladenylate + adenosine(37) in tRNA = N(6)-L-threonylcarbamoyladenosine(37) in tRNA + AMP + H(+). Required for the formation of a threonylcarbamoyl group on adenosine at position 37 (t(6)A37) in tRNAs that read codons beginning with adenine. Is involved in the transfer of the threonylcarbamoyl moiety of threonylcarbamoyl-AMP (TC-AMP) to the N6 group of A37, together with TsaE and TsaB. TsaD likely plays a direct catalytic role in this reaction. This Rickettsia rickettsii (strain Iowa) protein is tRNA N6-adenosine threonylcarbamoyltransferase.